A 122-amino-acid chain; its full sequence is MIQTQTYLNVSDNSGAKKIMCISIISTKRKYAKIGDTIIAVVKKASPNKIIKKSMIVKALIIRTTKPLYRKHNNMYISFNENAAIIINTDNTLKGTNIFGPVPRELMNIGFTNLNSTAKLII.

It belongs to the universal ribosomal protein uL14 family. In terms of assembly, part of the 50S ribosomal subunit.

The protein localises to the plastid. Functionally, binds to 23S rRNA. In Euglena longa (Euglenophycean alga), this protein is Large ribosomal subunit protein uL14c.